The sequence spans 93 residues: HssA/B-like protein 23 (93 aa).

It belongs to the hssA/B family.

In Dictyostelium discoideum (Social amoeba), this protein is HssA/B-like protein 23 (hssl23).